The following is a 138-amino-acid chain: Large ribosomal subunit protein uL16 (138 aa).

Basic residues predominate over residues 1 to 13; sequence MLQPKRRKYRKEQ. The tract at residues 1–24 is disordered; the sequence is MLQPKRRKYRKEQKGRNTGKATRG.

This sequence belongs to the universal ribosomal protein uL16 family. In terms of assembly, part of the 50S ribosomal subunit.

Binds 23S rRNA and is also seen to make contacts with the A and possibly P site tRNAs. In Burkholderia multivorans (strain ATCC 17616 / 249), this protein is Large ribosomal subunit protein uL16.